The sequence spans 501 residues: Glutathione gamma-glutamylcysteinyltransferase 1 (501 aa).

The Peptidase C83 domain occupies 1–221; the sequence is MAMAGLYRRL…GFMLISRPHR (221 aa). Catalysis depends on residues Cys-56, His-162, and Asp-180.

It belongs to the phytochelatin synthase family. As to expression, expressed in roots, nodules and leaves.

The enzyme catalyses [Glu(-Cys)](n)-Gly + glutathione + H(+) = [Glu(-Cys)](n+1)-Gly + glycine. Its activity is regulated as follows. Requires cadmium for activity. Also activated in vitro by Zn(2+), Cu(2+), Fe(2+) or Fe(3+) ions, but not by Co(2+) or Ni(2+) ions. Functionally, involved in the synthesis of phytochelatins (PC) and homophytochelatins (hPC), the heavy-metal-binding peptides of plants. The protein is Glutathione gamma-glutamylcysteinyltransferase 1 (PCS1) of Lotus japonicus (Lotus corniculatus var. japonicus).